The chain runs to 1130 residues: Sodium/potassium/calcium exchanger 1 (1130 aa).

At 1–419 (MGKLIRMGTQ…DLFSVEDRRQ (419 aa)) the chain is on the extracellular side. Residues 104–209 (PSIAMEDTPN…SPTATVRDRE (106 aa)) are disordered. A compositionally biased stretch (polar residues) spans 125–136 (LKNSYSPTTAGT). Over residues 170–187 (PRGERKNSSPTHAREKGR) the composition is skewed to basic and acidic residues. Asn176 and Asn273 each carry an N-linked (GlcNAc...) asparagine glycan. The tract at residues 274-295 (ISTTPQGAVPQHTPATSEEQMT) is disordered. Polar residues predominate over residues 286 to 295 (TPATSEEQMT). Residues 420–440 (GWVVLHIFGMMYVFVALAIVC) form a helical membrane-spanning segment. Residues 441 to 464 (DEYFVPALGVITHKLQISEDVAGA) are Cytoplasmic-facing. Residues 461–501 (VAGATFMAAGGSAPELFTSLIGVFISHSNVGIGTIVGSAVF) form an Alpha-1 repeat. The chain crosses the membrane as a helical span at residues 465–485 (TFMAAGGSAPELFTSLIGVFI). At 486–489 (SHSN) the chain is on the extracellular side. Residues 490–510 (VGIGTIVGSAVFNILFVIGTC) form a helical membrane-spanning segment. The Cytoplasmic segment spans residues 511-530 (ALFSREILNLTWWPLFRDVS). The helical transmembrane segment at 531–551 (FYILDLSMLIVFFLDSFIAWW) threads the bilayer. Residue Glu552 is a topological domain, extracellular. A helical membrane pass occupies residues 553–573 (SLLLLLAYALYVFTMKWNKQI). Topologically, residues 574–938 (ELWVKEQLSR…SLEWPDSRQK (365 aa)) are cytoplasmic. Positions 598–619 (PSEDAVEENEQQDSKKLKLPSV) are disordered. Position 625 is a phosphoserine (Ser625). Positions 650–932 (GEARPSKDKQ…ENEEPLSLEW (283 aa)) are disordered. Polar residues predominate over residues 661-675 (SLNQEARVLSQTKAE). Thr690 carries the post-translational modification Phosphothreonine. The segment covering 703-715 (QEDDPGCQEDVDE) has biased composition (acidic residues). Basic and acidic residues predominate over residues 730 to 751 (ETETEGKKDEQEGETEAERKED). 2 stretches are compositionally biased toward acidic residues: residues 766 to 782 (GETEAEGKEDEQEGETE) and 802 to 820 (QEGETEAEGKEDEQEGETE). The segment covering 833 to 855 (AESKEVEQERETEAEGKDKHEGQ) has biased composition (basic and acidic residues). 2 stretches are compositionally biased toward acidic residues: residues 870-880 (GETEANAEDQC) and 896-928 (DGGDSEEEEDEEDEEEEEEEDEEEEEEENEEPL). The chain crosses the membrane as a helical span at residues 939-959 (QAIYLFLLPIVFPLWLTIPDV). The Extracellular portion of the chain corresponds to 960–966 (RRQESRK). Residues 967-987 (FFVITFLGSIIWIAMFSYLMV) traverse the membrane as a helical segment. At 988-1002 (WWAHQVGETIGISEE) the chain is on the cytoplasmic side. Residues 1003–1023 (IMGLTILAAGTSIPDLITSVI) form a helical membrane-spanning segment. An Alpha-2 repeat occupies 1010-1041 (AAGTSIPDLITSVIVARKGLGDMAVSSSVGSN). At 1024–1041 (VARKGLGDMAVSSSVGSN) the chain is on the extracellular side. A helical transmembrane segment spans residues 1042 to 1062 (IFDITVGLPVPWLLFSLINAL). The Cytoplasmic segment spans residues 1063–1070 (QPVPVSSN). The helical transmembrane segment at 1071 to 1091 (GLFCAIVLLFLMLLFVIFSIA) threads the bilayer. The Extracellular portion of the chain corresponds to 1092–1099 (SCKWRMNK). The helical transmembrane segment at 1100–1120 (ILGFTMFLLYFVFLVISVMLE) threads the bilayer. Residues 1121-1130 (DRIISCPVSV) are Cytoplasmic-facing.

This sequence belongs to the Ca(2+):cation antiporter (CaCA) (TC 2.A.19) family. SLC24A subfamily. In terms of processing, the uncleaved signal sequence is required for efficient membrane targeting and proper membrane integration and topology.

It is found in the cell membrane. The catalysed reaction is Ca(2+)(out) + K(+)(out) + 4 Na(+)(in) = Ca(2+)(in) + K(+)(in) + 4 Na(+)(out). Its function is as follows. Calcium, potassium:sodium antiporter that transports 1 Ca(2+) and 1 K(+) in exchange for 4 Na(+). Critical component of the visual transduction cascade, controlling the calcium concentration of outer segments during light and darkness. Light causes a rapid lowering of cytosolic free calcium in the outer segment of both retinal rod and cone photoreceptors and the light-induced lowering of calcium is caused by extrusion via this protein which plays a key role in the process of light adaptation. This chain is Sodium/potassium/calcium exchanger 1, found in Mus musculus (Mouse).